A 332-amino-acid chain; its full sequence is Ribose operon repressor (332 aa).

The HTH lacI-type domain occupies 2 to 56 (ATMKDIARLAQVSTSTVSHVINGSRFVSDEIREKVMRIVAELNYTPSAVARSLKV). A DNA-binding region (H-T-H motif) is located at residues 4-23 (MKDIARLAQVSTSTVSHVIN).

In terms of biological role, transcriptional repressor for the ribose rbsDACBK operon. This is Ribose operon repressor (rbsR) from Haemophilus influenzae (strain ATCC 51907 / DSM 11121 / KW20 / Rd).